The primary structure comprises 670 residues: Transketolase, plasmid (670 aa).

His-32 provides a ligand contact to substrate. Thiamine diphosphate-binding positions include His-72 and 120-122 (GPL). Residue Asp-161 coordinates Mg(2+). The thiamine diphosphate site is built by Gly-162 and Asn-191. Mg(2+) is bound by residues Asn-191 and Ile-193. Residues His-267, Arg-364, and Ser-391 each contribute to the substrate site. Thiamine diphosphate is bound at residue His-267. Glu-417 functions as the Proton donor in the catalytic mechanism. Phe-443 contacts thiamine diphosphate. Positions 467, 475, and 526 each coordinate substrate.

This sequence belongs to the transketolase family. As to quaternary structure, homodimer. Mg(2+) serves as cofactor. Ca(2+) is required as a cofactor. The cofactor is Mn(2+). Requires Co(2+) as cofactor. It depends on thiamine diphosphate as a cofactor.

It catalyses the reaction D-sedoheptulose 7-phosphate + D-glyceraldehyde 3-phosphate = aldehydo-D-ribose 5-phosphate + D-xylulose 5-phosphate. It functions in the pathway carbohydrate biosynthesis; Calvin cycle. Catalyzes the transfer of a two-carbon ketol group from a ketose donor to an aldose acceptor, via a covalent intermediate with the cofactor thiamine pyrophosphate. In Cupriavidus necator (strain ATCC 17699 / DSM 428 / KCTC 22496 / NCIMB 10442 / H16 / Stanier 337) (Ralstonia eutropha), this protein is Transketolase, plasmid (cbbTP).